Here is a 409-residue protein sequence, read N- to C-terminus: Peptidase T (409 aa).

H79 provides a ligand contact to Zn(2+). Residue D81 is part of the active site. D140 contributes to the Zn(2+) binding site. The active-site Proton acceptor is the E174. Zn(2+) is bound by residues E175, D197, and H379.

This sequence belongs to the peptidase M20B family. Zn(2+) is required as a cofactor.

It localises to the cytoplasm. It carries out the reaction Release of the N-terminal residue from a tripeptide.. Cleaves the N-terminal amino acid of tripeptides. The protein is Peptidase T of Lysinibacillus sphaericus (strain C3-41).